We begin with the raw amino-acid sequence, 205 residues long: Protein Rcp (205 aa).

This sequence belongs to the NAD(P)-dependent epimerase/dehydratase family.

This is Protein Rcp (rcp) from Vibrio cholerae serotype O1 (strain ATCC 39315 / El Tor Inaba N16961).